Reading from the N-terminus, the 414-residue chain is Nucleoporin NUP42 (414 aa).

A C3H1-type zinc finger spans residues 1 to 25 (MPVCNFFLQGRCRYGDTCWNEHPTG). 2 disordered regions span residues 24 to 73 (TGGR…RGAA) and 200 to 221 (PPASAPGFGSPGPGFGSATSGF). FG repeat units lie at residues 43–44 (FG), 207–208 (FG), 214–215 (FG), 221–222 (FG), 233–234 (FG), 238–239 (FG), 257–258 (FG), 268–269 (FG), 280–281 (FG), 306–307 (FG), 325–326 (FG), 329–330 (FG), 335–336 (FG), 341–342 (FG), 347–348 (FG), 351–352 (FG), and 362–363 (FG).

In terms of assembly, probable component of the nuclear pore complex (NPC).

The protein resides in the nucleus. It is found in the nuclear pore complex. Its subcellular location is the nucleus membrane. In terms of biological role, required for the export of mRNAs containing poly(A) tails from the nucleus into the cytoplasm. This is Nucleoporin NUP42 (nup42) from Danio rerio (Zebrafish).